We begin with the raw amino-acid sequence, 180 residues long: Large ribosomal subunit protein uL6 (180 aa).

This sequence belongs to the universal ribosomal protein uL6 family. In terms of assembly, part of the 50S ribosomal subunit.

This protein binds to the 23S rRNA, and is important in its secondary structure. It is located near the subunit interface in the base of the L7/L12 stalk, and near the tRNA binding site of the peptidyltransferase center. This is Large ribosomal subunit protein uL6 from Borrelia turicatae (strain 91E135).